The sequence spans 260 residues: Adenosylcobinamide-GDP ribazoletransferase (260 aa).

Transmembrane regions (helical) follow at residues Thr42–Ile62, Leu68–Leu88, Ile118–Leu137, Trp144–Ser166, Ala180–Thr200, Leu201–Ile221, and Ile237–Gln257.

This sequence belongs to the CobS family. Mg(2+) serves as cofactor.

The protein resides in the cell inner membrane. It carries out the reaction alpha-ribazole + adenosylcob(III)inamide-GDP = adenosylcob(III)alamin + GMP + H(+). The catalysed reaction is alpha-ribazole 5'-phosphate + adenosylcob(III)inamide-GDP = adenosylcob(III)alamin 5'-phosphate + GMP + H(+). It participates in cofactor biosynthesis; adenosylcobalamin biosynthesis; adenosylcobalamin from cob(II)yrinate a,c-diamide: step 7/7. Joins adenosylcobinamide-GDP and alpha-ribazole to generate adenosylcobalamin (Ado-cobalamin). Also synthesizes adenosylcobalamin 5'-phosphate from adenosylcobinamide-GDP and alpha-ribazole 5'-phosphate. The polypeptide is Adenosylcobinamide-GDP ribazoletransferase (Bradyrhizobium diazoefficiens (strain JCM 10833 / BCRC 13528 / IAM 13628 / NBRC 14792 / USDA 110)).